A 220-amino-acid chain; its full sequence is 6-phosphogluconolactonase (220 aa).

Belongs to the glucosamine/galactosamine-6-phosphate isomerase family. 6-phosphogluconolactonase subfamily.

It carries out the reaction 6-phospho-D-glucono-1,5-lactone + H2O = 6-phospho-D-gluconate + H(+). Its pathway is carbohydrate degradation; pentose phosphate pathway; D-ribulose 5-phosphate from D-glucose 6-phosphate (oxidative stage): step 2/3. Its function is as follows. Hydrolysis of 6-phosphogluconolactone to 6-phosphogluconate. The polypeptide is 6-phosphogluconolactonase (pgl) (Thermotoga maritima (strain ATCC 43589 / DSM 3109 / JCM 10099 / NBRC 100826 / MSB8)).